The primary structure comprises 387 residues: Patatin-05 (387 aa).

An N-terminal signal peptide occupies residues 1-23 (MATTKSVLVLIFMILATTSSTFA). A PNPLA domain is found at 32–230 (LSIDGGGIKG…TVADPALLSV (199 aa)). The GXGXXG motif lies at 36–41 (GGGIKG). The GXSXG signature appears at 75–79 (GTSTG). S77 acts as the Nucleophile in catalysis. N115 and N203 each carry an N-linked (GlcNAc...) asparagine glycan. D216 serves as the catalytic Proton acceptor. Residues 216-218 (DGA) carry the DGA/G motif.

The protein belongs to the patatin family. Tuber.

The protein resides in the vacuole. In terms of biological role, probable lipolytic acyl hydrolase (LAH), an activity which is thought to be involved in the response of tubers to pathogens. This is Patatin-05 (pat1-k1) from Solanum tuberosum (Potato).